Reading from the N-terminus, the 215-residue chain is ER lumen protein-retaining receptor 3 (215 aa).

Residues 1-4 (MNIF) lie on the Lumenal side of the membrane. Residues 5–24 (RLSGDVCHLIAIIILFLKIW) traverse the membrane as a helical segment. Over 25–32 (RSKSCAGI) the chain is Cytoplasmic. A helical membrane pass occupies residues 33 to 52 (SGKSQVLFALVFTTRYLDLF). The segment at 47-48 (RY) is interaction with the K-D-E-L motif on target proteins. The Lumenal segment spans residues 53-58 (TSYISA). A helical transmembrane segment spans residues 59–79 (YNTVMKVVYLLLAYSTVGLIF). Over 80–92 (FRFRNSYDSESDS) the chain is Cytoplasmic. The chain crosses the membrane as a helical span at residues 93 to 110 (FRVEFLLVPVAGLSFLEN). The Lumenal segment spans residues 111-116 (YAFTPL). A helical transmembrane segment spans residues 117–135 (EILWTFSIYLESVAILPQL). Residues 136–149 (FMITKTGEAESITA) lie on the Cytoplasmic side of the membrane. The chain crosses the membrane as a helical span at residues 150–168 (HYLLFLGLYRALYLANWLW). The tract at residues 159-169 (RALYLANWLWR) is interaction with the K-D-E-L motif on target proteins. Residues 169-178 (RFHTEGFYDQ) are Lumenal-facing. The chain crosses the membrane as a helical span at residues 179–199 (IAVVSGVVQTIFYCDFFYLYF). Topologically, residues 200 to 215 (TRVLRGSGKMSLPMPV) are cytoplasmic. Residues 204–208 (RGSGK) form an important for recycling of cargo proteins with the sequence motif K-D-E-L from the Golgi to the endoplasmic reticulum region.

It belongs to the ERD2 family.

It localises to the endoplasmic reticulum membrane. The protein localises to the golgi apparatus membrane. It is found in the cytoplasmic vesicle. Its subcellular location is the COPI-coated vesicle membrane. Functionally, receptor for the C-terminal sequence motif K-D-E-L that is present on endoplasmic reticulum resident proteins and that mediates their recycling from the Golgi back to the endoplasmic reticulum. The sequence is that of ER lumen protein-retaining receptor 3 (kdelr3) from Danio rerio (Zebrafish).